Consider the following 313-residue polypeptide: Sorting nexin-20 (313 aa).

The segment at 1-61 (MASPQHPGGP…MTTRELQEHW (61 aa)) is disordered. Ser3 is modified (phosphoserine). Residues 29 to 38 (PPGPDLPCPG) show a composition bias toward pro residues. Residues 45 to 55 (GPTSNSNMTTR) show a composition bias toward polar residues. One can recognise a PX domain in the interval 71 to 188 (VRLLFEIASA…DFLTRPELCE (118 aa)). A 1,2-diacyl-sn-glycero-3-phospho-(1D-myo-inositol-3-phosphate)-binding residues include Arg113, Ser115, Lys140, and Arg154.

This sequence belongs to the sorting nexin family. As to quaternary structure, interacts with SELPLG. Interaction with SELPLG is controversial.

The protein localises to the early endosome membrane. Its subcellular location is the cell membrane. The protein resides in the cytoplasm. It is found in the nucleus. Its function is as follows. May play a role in cellular vesicle trafficking. Has been proposed to function as a sorting protein that targets SELPLG into endosomes, but has no effect on SELPLG internalization from the cell surface, or on SELPLG-mediated cell-cell adhesion. The protein is Sorting nexin-20 (Snx20) of Rattus norvegicus (Rat).